We begin with the raw amino-acid sequence, 168 residues long: Lipoprotein signal peptidase (168 aa).

3 consecutive transmembrane segments (helical) span residues 15–35 (AIAAVTVVLDQISKLWILGLL), 69–89 (WGRWLLIGFSILVVIGLAVWV), and 95–115 (PLLAVGIGLIIGGAIGNNLID). Residues aspartate 124 and aspartate 141 contribute to the active site. A helical transmembrane segment spans residues 133-153 (FPWVFNIADSGISVGVALLLL).

This sequence belongs to the peptidase A8 family.

The protein localises to the cell inner membrane. It catalyses the reaction Release of signal peptides from bacterial membrane prolipoproteins. Hydrolyzes -Xaa-Yaa-Zaa-|-(S,diacylglyceryl)Cys-, in which Xaa is hydrophobic (preferably Leu), and Yaa (Ala or Ser) and Zaa (Gly or Ala) have small, neutral side chains.. The protein operates within protein modification; lipoprotein biosynthesis (signal peptide cleavage). Functionally, this protein specifically catalyzes the removal of signal peptides from prolipoproteins. The polypeptide is Lipoprotein signal peptidase (Caulobacter vibrioides (strain ATCC 19089 / CIP 103742 / CB 15) (Caulobacter crescentus)).